The sequence spans 275 residues: Phospholipid scramblase (275 aa).

The helical transmembrane segment at Trp256–Tyr272 threads the bilayer.

This sequence belongs to the phospholipid scramblase family. Forms homooligomers in the presence of calcium. Ca(2+) serves as cofactor. Requires Mg(2+) as cofactor.

The protein localises to the membrane. The protein resides in the cell membrane. The catalysed reaction is a 1,2-diacyl-sn-glycero-3-phosphoethanolamine(in) = a 1,2-diacyl-sn-glycero-3-phosphoethanolamine(out). Functionally, catalyzes calcium-induced ATP-independent rapid bidirectional and non-specific movement of phospholipids (lipid scrambling or lipid flip-flop) between the inner and outer leaflet of the plasma membrane resulting in collapse of the phospholipid asymmetry. Preferentially, mediates calcium-dependent phosphatidylethanolamine externalization. During the liver stage, plays a role in the interaction with, and thus invasion of, host hepatocytes. Dispensable for host erythrocyte invasion and asexual parasite development. This chain is Phospholipid scramblase, found in Plasmodium falciparum (isolate 3D7).